The sequence spans 178 residues: Oligoribonuclease (178 aa).

Residues 7 to 168 enclose the Exonuclease domain; the sequence is LIWIDLEMTG…DDIRESIAEL (162 aa). Tyr-128 is a catalytic residue.

It belongs to the oligoribonuclease family.

It localises to the cytoplasm. Its function is as follows. 3'-to-5' exoribonuclease specific for small oligoribonucleotides. The protein is Oligoribonuclease of Pseudomonas savastanoi pv. phaseolicola (strain 1448A / Race 6) (Pseudomonas syringae pv. phaseolicola (strain 1448A / Race 6)).